The primary structure comprises 490 residues: Selenium-binding protein 1 (490 aa).

N-acetylalanine is present on A2. Selenite contacts are provided by C21 and C22.

It belongs to the selenium-binding protein family. In terms of assembly, interacts with GRXS14 and GRXS16. Interacts with DALL3. Expressed in seedlings, roots, leaves, stems and flowers.

Its function is as follows. Binds cadmium and mediates lower sensitivity to stress requiring glutathione (GSH) for tolerance (e.g. cadmium, selenate, and hydrogen peroxide excess). Probably helps to detoxify cadmium potentially through direct binding. Binds selenium, cadmium, zinc and nickel in vitro. The chain is Selenium-binding protein 1 from Arabidopsis thaliana (Mouse-ear cress).